The following is a 747-amino-acid chain: MRRCNSGSGPPPSLLLLLLWLLAVPGANAAPRSALYSPSDPLTLLQADTVRGAVLGSRSAWAVEFFASWCGHCIAFAPTWKALAEDVKAWRPALYLAALDCAEETNSAVCRDFNIPGFPTVRFFKAFTKNGSGAVFPVAGADVQTLRERLIDALESHHDTWPPACPPLEPAKLEEIDGFFARNNEEYLALIFEKGGSYLGREVALDLSQHKGVAVRRVLNTEANVVRKFGVTDFPSCYLLFRNGSVSRVPVLMESRSFYTAYLQRLSGLTREAAQTTVAPTTANKIAPTVWKLADRSKIYMADLESALHYILRIEVGRFPVLEGQRLVALKKFVAVLAKYFPGRPLVQNFLHSVNEWLKRQKRNKIPYSFFKTALDDRKEGAVLAKKVNWIGCQGSEPHFRGFPCSLWVLFHFLTVQAARQNVDHSQEAAKAKEVLPAIRGYVHYFFGCRDCASHFEQMAAASMHRVGSPNAAVLWLWSSHNRVNARLAGAPSEDPQFPKVQWPPRELCSACHNERLDVPVWDVEATLNFLKAHFSPSNIILDFPAAGSAARRDVQNVAAAPELAMGALELESRNSTLDPGKPEMMKSPTNTTPHVPAEGPEASRPPKLHPGLRAAPGQEPPEHMAELQRNEQEQPLGQWHLSKRDTGAALLAESRAEKNRLWGPLEVRRVGRSSKQLVDIPEGQLEARAGRGRGQWLQVLGGGFSYLDISLCVGLYSLSFMGLLAMYTYFQAKIRALKGHAGHPAA.

Residues 1-29 form the signal peptide; the sequence is MRRCNSGSGPPPSLLLLLLWLLAVPGANA. The 121-residue stretch at 36–156 folds into the Thioredoxin domain; it reads YSPSDPLTLL…RERLIDALES (121 aa). Catalysis depends on nucleophile residues cysteine 70 and cysteine 73. 2 disulfides stabilise this stretch: cysteine 70–cysteine 73 and cysteine 101–cysteine 110. An N-linked (GlcNAc...) (complex) asparagine glycan is attached at asparagine 130. N-linked (GlcNAc...) asparagine glycosylation occurs at asparagine 243. A disulfide bridge connects residues cysteine 393 and cysteine 405. The ERV/ALR sulfhydryl oxidase domain maps to 396 to 503; that stretch reads SEPHFRGFPC…EDPQFPKVQW (108 aa). FAD is bound by residues arginine 401, tryptophan 408, and histidine 412. The residue at position 426 (serine 426) is a Phosphoserine; by FAM20C. An intrachain disulfide couples cysteine 449 to cysteine 452. FAD is bound by residues aspartate 451, histidine 455, 478 to 485, lysine 500, and tryptophan 503; that span reads WSSHNRVN. A disulfide bridge connects residues cysteine 509 and cysteine 512. The disordered stretch occupies residues 573–633; sequence SRNSTLDPGK…HMAELQRNEQ (61 aa). Asparagine 575 carries N-linked (GlcNAc...) asparagine glycosylation. The segment covering 621–633 has biased composition (basic and acidic residues); it reads PPEHMAELQRNEQ. Residues 710–730 traverse the membrane as a helical segment; that stretch reads ISLCVGLYSLSFMGLLAMYTY.

Belongs to the quiescin-sulfhydryl oxidase (QSOX) family. Monomer. FAD serves as cofactor. Post-translationally, N-glycosylated. O-glycosylated on Thr and Ser residues. Expressed in heart, placenta, lung, liver, skeletal muscle, pancreas and very weakly in brain and kidney.

It localises to the golgi apparatus membrane. The protein resides in the secreted. It carries out the reaction 2 R'C(R)SH + O2 = R'C(R)S-S(R)CR' + H2O2. Its function is as follows. Catalyzes the oxidation of sulfhydryl groups in peptide and protein thiols to disulfides with the reduction of oxygen to hydrogen peroxide. Plays a role in disulfide bond formation in a variety of extracellular proteins. In fibroblasts, required for normal incorporation of laminin into the extracellular matrix, and thereby for normal cell-cell adhesion and cell migration. The chain is Sulfhydryl oxidase 1 (QSOX1) from Homo sapiens (Human).